Consider the following 516-residue polypeptide: Amino-acid permease BAT1 (516 aa).

The next 12 helical transmembrane spans lie at 33–53, 70–90, 113–133, 164–184, 189–209, 232–252, 275–295, 328–348, 383–403, 406–426, 452–472, and 483–503; these read LSVFSNFAISFSIISVLTGIT, YGWFLAGSFTMCVGLSMAEIC, PLASWMTGWFNIVGQWAVTAS, VVIGIHGGILFIHALLNSLPI, FIGQLAALWNLLGVLVLMILI, LGITSYAYIFVLGLLMSQYTI, GIISAIGISILFGWGYILGIS, FGSGTGGIVCLGVVAVAVFFC, VPINAVWLSALISFCMALTSL, IVAFQAMVSIATIGLYIAYAI, VVGWVAVLWVVTISVLFSLPV, and YTPVAVAGLVAITLSYWLFSA.

The protein belongs to the amino acid-polyamine-organocation (APC) superfamily. Amino acid/choline transporter (ACT) (TC 2.A.3.4) family. As to expression, expressed in roots, rosette leaves, stems, cauline leaves, flowers and siliques.

Its subcellular location is the mitochondrion membrane. Its function is as follows. May play a role in primary carbon metabolism and plant growth, by mediating the transport of GABA from the cytosol to mitochondria. When expressed in a heterologous system (yeast), imports Arg and Ala across the plasma membrane and exports Lys and Glu, but does not transport proline. The chain is Amino-acid permease BAT1 (BAT1) from Arabidopsis thaliana (Mouse-ear cress).